We begin with the raw amino-acid sequence, 814 residues long: MEDGFSSYSSLYDTSSLLQFCNDDSASAASSMEVSDRIASLEQRVQMQEDDIQLLKSALADVVRRLNITEEQQAVLNRKGPTKARPLGQTLPLRTTVNNGTVLPKKPSASLPAPSGARKEVVVPVTKSINRTSSSERVSPGGRRESSGDSKGSRNRTGSTSSSSSGKKNSESKPKEPAFSPEEGYVKMFLRGRPVTMYMPKDQVDSYSLEAKAELPTKRLKLEWVYGYRGRDCRNNLYLLPTGETVYFIASVVVLYNVEEQLQRHYAGHNDDVKCLAVHPDRITIATGQVAGTSKDGKQLPPHVRIWDSVTLNTLHVIGIGFFDRAVTCIAFSKSNGGGHLCAVDDSNDHVLSVWDWQKEERLADVKCSNEAVFAADFHPTDTNIIVTCGKSHLYFWTLEGNSLNKKQGLFEKQEKPKFVLCVTFSENGDTITGDSSGNILVWGKGTNRISYAVQGAHEGGIFALCMLRDGTLVSGGGKDRRLISWNGNYQKLHKAEIPEQFGPIRTVAEGKGNVILIGTTRNFVLQGTLSGDFTPITQGHTDELWGLAIHASKPQFLTCGHDKHATLWDAVGHRPVWDKIIEDPAQSSGFHPSGSVVAVGTLTGRWFVFDTETKDLVTVHTDGNEQLSVMRYSPDGNFLAIGSHDNCIYIYGVTDNGRKYTRVGKCSGHSSFITHLDWSVNSQFLVSNSGDYEILYWVPSACKQVVSVETTRDIEWATYTCTLGFHVFGVWPEGSDGTDINAVCRAHERKLLCTGDDFGKVHLFSYPCSQFRAPSHIYSGHSSHVTNVDFLCEDSHLISTGGKDTSIMQWRVI.

Positions serine 31–glutamine 72 form a coiled coil. Positions asparagine 77–serine 180 are disordered. Polar residues predominate over residues proline 92–threonine 101. The span at leucine 103–serine 115 shows a compositional bias: low complexity. Positions lysine 127 to arginine 137 are enriched in polar residues. The span at glycine 142 to glycine 152 shows a compositional bias: basic and acidic residues. A compositionally biased stretch (low complexity) spans asparagine 155–lysine 167. The segment at lysine 175 to isoleucine 814 is tandem atypical propeller in EMLs. 12 WD repeats span residues glutamate 260 to serine 309, threonine 314 to tryptophan 357, arginine 362 to leucine 399, glutamine 408 to lysine 445, arginine 449 to glycine 488, lysine 492 to threonine 529, phenylalanine 534 to alanine 571, valine 577 to threonine 612, aspartate 616 to valine 654, arginine 663 to proline 700, serine 708 to tyrosine 767, and alanine 774 to valine 813.

It belongs to the WD repeat EMAP family. Homotrimer; self-association is mediated by the N-terminal coiled coil. Does not interact with EML3. Binds unpolymerized tubulins via its WD repeat region. Binds repolymerizing microtubules. Interacts with TASOR. As to expression, detected in adult brain cortex, hippocampus and thalamus. Expressed in the stomach, lungs and in Sertoli cells of the testis.

It localises to the cytoplasm. The protein localises to the perinuclear region. The protein resides in the cytoskeleton. Modulates the assembly and organization of the microtubule cytoskeleton, and probably plays a role in regulating the orientation of the mitotic spindle and the orientation of the plane of cell division. Required for normal proliferation of neuronal progenitor cells in the developing brain and for normal brain development. Does not affect neuron migration per se. In Mus musculus (Mouse), this protein is Echinoderm microtubule-associated protein-like 1 (Eml1).